The chain runs to 552 residues: Arginine--tRNA ligase (552 aa).

A 'HIGH' region motif is present at residues Ala123 to Arg133.

Belongs to the class-I aminoacyl-tRNA synthetase family. As to quaternary structure, monomer.

The protein localises to the cytoplasm. The enzyme catalyses tRNA(Arg) + L-arginine + ATP = L-arginyl-tRNA(Arg) + AMP + diphosphate. This chain is Arginine--tRNA ligase, found in Chlorobium phaeovibrioides (strain DSM 265 / 1930) (Prosthecochloris vibrioformis (strain DSM 265)).